Reading from the N-terminus, the 1028-residue chain is Exportin-T (1028 aa).

This sequence belongs to the exportin family.

The protein resides in the nucleus. It is found in the cytoplasm. TRNA nucleus export receptor which facilitates tRNA translocation across the nuclear pore complex. Involved in pre-tRNA splicing, probably by affecting the interaction of pre-tRNA with splicing endonuclease. This chain is Exportin-T (los1), found in Aspergillus terreus (strain NIH 2624 / FGSC A1156).